The sequence spans 167 residues: Alanine- and arginine-rich domain-containing protein (167 aa).

The tract at residues 140–167 (LKKRQDQELASKPQSPQDKEMNSECGSA) is disordered.

Preferentially expressed in testis both in embryo and adult. Expressed at much lower level in other tissues.

This Mus musculus (Mouse) protein is Alanine- and arginine-rich domain-containing protein (Aard).